We begin with the raw amino-acid sequence, 223 residues long: Putative 3-methyladenine DNA glycosylase (223 aa).

This sequence belongs to the DNA glycosylase MPG family.

The polypeptide is Putative 3-methyladenine DNA glycosylase (Pseudomonas syringae pv. syringae (strain B728a)).